The sequence spans 172 residues: Transcriptional regulator TAC1 (172 aa).

The interval 1–28 (MENIKNPKNADDCSDSISKNSHQGVDDS) is disordered. Polar residues predominate over residues 15 to 28 (DSISKNSHQGVDDS). The segment at 35–57 (YVCSFCIRGFSNAQALGGHMNIH) adopts a C2H2-type zinc-finger fold. The EAR-like (transcriptional repression) signature appears at 156–160 (LDLEL).

As to expression, preferentially expressed in roots and flowers. Slightly expressed in leaves and stems.

The protein localises to the nucleus. Functionally, activation factor which mediates telomerase activity and potentiates responses to auxin through the regulation of BT2. Binds in vitro to the DNA sequence 5'-GACAGTGTTAC-3' of the BT2 promoter. The protein is Transcriptional regulator TAC1 (TAC1) of Arabidopsis thaliana (Mouse-ear cress).